A 149-amino-acid chain; its full sequence is MSIRKILQFPDYRLRLLSKPIKIINKKTKKIIYDMFDTMYANNGIGLAAPQINILKQIIVISSLKPTMSELVLINPVILKKNKKYINTIEGCLSIPKKTAKIKRSSCIKIQAINTYGKSFTLTAKSLLSICIQHEIDHLIGKLFIDYIN.

Residues Cys-92 and His-134 each contribute to the Fe cation site. Glu-135 is a catalytic residue. His-138 is a binding site for Fe cation.

The protein belongs to the polypeptide deformylase family. Fe(2+) is required as a cofactor.

The enzyme catalyses N-terminal N-formyl-L-methionyl-[peptide] + H2O = N-terminal L-methionyl-[peptide] + formate. In terms of biological role, removes the formyl group from the N-terminal Met of newly synthesized proteins. Requires at least a dipeptide for an efficient rate of reaction. N-terminal L-methionine is a prerequisite for activity but the enzyme has broad specificity at other positions. The protein is Peptide deformylase of Buchnera aphidicola subsp. Cinara cedri (strain Cc).